A 443-amino-acid polypeptide reads, in one-letter code: ATP-dependent protease ATPase subunit HslU (443 aa).

ATP-binding positions include I20, 62–67 (GVGKTE), D255, E321, and R393.

It belongs to the ClpX chaperone family. HslU subfamily. A double ring-shaped homohexamer of HslV is capped on each side by a ring-shaped HslU homohexamer. The assembly of the HslU/HslV complex is dependent on binding of ATP.

The protein localises to the cytoplasm. Its function is as follows. ATPase subunit of a proteasome-like degradation complex; this subunit has chaperone activity. The binding of ATP and its subsequent hydrolysis by HslU are essential for unfolding of protein substrates subsequently hydrolyzed by HslV. HslU recognizes the N-terminal part of its protein substrates and unfolds these before they are guided to HslV for hydrolysis. This is ATP-dependent protease ATPase subunit HslU from Helicobacter pylori (strain J99 / ATCC 700824) (Campylobacter pylori J99).